Here is a 269-residue protein sequence, read N- to C-terminus: 5'-nucleotidase SurE (269 aa).

A divalent metal cation-binding residues include Asp11, Asp12, Ser43, and Asn101.

The protein belongs to the SurE nucleotidase family. The cofactor is a divalent metal cation.

It localises to the cytoplasm. It carries out the reaction a ribonucleoside 5'-phosphate + H2O = a ribonucleoside + phosphate. Its function is as follows. Nucleotidase that shows phosphatase activity on nucleoside 5'-monophosphates. This chain is 5'-nucleotidase SurE, found in Prochlorococcus marinus (strain MIT 9515).